The following is a 317-amino-acid chain: Transcription factor EC (317 aa).

The interval Met1–Ile90 is necessary for transcriptional transactivation. One can recognise a bHLH domain in the interval Gln110 to Leu163. Positions Thr242–Leu317 are necessary for transcriptional transactivation.

This sequence belongs to the MiT/TFE family. As to quaternary structure, homodimer. Forms heterodimers with MITF. Interacts with MITF. Forms heterodimers with TFE3. Expressed in osteoclast-like cells (at protein level). Expressed in cells of the mononuclear phagocyte lineage. Expressed in macrophages and in osteoclast-like cells.

Its subcellular location is the nucleus. In terms of biological role, transcriptional regulator that acts as a repressor or an activator. Acts as a transcriptional transactivator on the proximal promoter region of the tartrate-resistant acid phosphatase (TRAP) E-box containing promoter. Collaborates with MITF in target gene activation. Acts as a transcriptional repressor on minimal promoter containing element F (that includes an E-box sequence). Binds to element F in an E-box sequence-specific manner. Acts as a transcriptional repressor on minimal promoter containing mu E3 enhancer sequence. Binds to mu E3 DNA sequence of the immunoglobulin heavy-chain gene enhancer. Binds DNA in a homo- or heterodimeric form. The polypeptide is Transcription factor EC (Tfec) (Mus musculus (Mouse)).